A 119-amino-acid polypeptide reads, in one-letter code: Methylglyoxal synthase (119 aa).

The MGS-like domain occupies 1–119; sequence MRIALIAHDK…GTADLIIKQF (119 aa). Substrate-binding positions include His8, Lys12, 34 to 37, and 54 to 55; these read TGTT and SG. The Proton donor/acceptor role is filled by Asp60. His87 lines the substrate pocket.

This sequence belongs to the methylglyoxal synthase family.

The enzyme catalyses dihydroxyacetone phosphate = methylglyoxal + phosphate. In terms of biological role, catalyzes the formation of methylglyoxal from dihydroxyacetone phosphate. The polypeptide is Methylglyoxal synthase (Clostridium botulinum (strain Eklund 17B / Type B)).